Reading from the N-terminus, the 189-residue chain is UPF0688 protein C1orf174 homolog (189 aa).

The interval 53–137 (QMAGDGGEAK…TTDPSVFFDE (85 aa)) is disordered. Composition is skewed to basic and acidic residues over residues 59-73 (GEAK…HGEV) and 93-103 (APGERRGKENS).

Belongs to the UPF0688 family.

The protein localises to the nucleus. This Danio rerio (Zebrafish) protein is UPF0688 protein C1orf174 homolog.